The sequence spans 128 residues: Large ribosomal subunit protein bL12 (128 aa).

Belongs to the bacterial ribosomal protein bL12 family. Homodimer. Part of the ribosomal stalk of the 50S ribosomal subunit. Forms a multimeric L10(L12)X complex, where L10 forms an elongated spine to which 2 to 4 L12 dimers bind in a sequential fashion. Binds GTP-bound translation factors.

Forms part of the ribosomal stalk which helps the ribosome interact with GTP-bound translation factors. Is thus essential for accurate translation. The chain is Large ribosomal subunit protein bL12 from Phenylobacterium zucineum (strain HLK1).